The chain runs to 314 residues: Homoserine O-succinyltransferase (314 aa).

The active-site Acyl-thioester intermediate is the cysteine 142. Substrate is bound by residues lysine 163 and serine 192. Catalysis depends on histidine 235, which acts as the Proton acceptor. Glutamate 237 is a catalytic residue. Arginine 249 is a binding site for substrate.

This sequence belongs to the MetA family.

It is found in the cytoplasm. It carries out the reaction L-homoserine + succinyl-CoA = O-succinyl-L-homoserine + CoA. The protein operates within amino-acid biosynthesis; L-methionine biosynthesis via de novo pathway; O-succinyl-L-homoserine from L-homoserine: step 1/1. Its function is as follows. Transfers a succinyl group from succinyl-CoA to L-homoserine, forming succinyl-L-homoserine. In Aeromonas salmonicida (strain A449), this protein is Homoserine O-succinyltransferase.